The sequence spans 67 residues: DNA-directed RNA polymerase subunit omega (67 aa).

It belongs to the RNA polymerase subunit omega family. The RNAP catalytic core consists of 2 alpha, 1 beta, 1 beta' and 1 omega subunit. When a sigma factor is associated with the core the holoenzyme is formed, which can initiate transcription.

The enzyme catalyses RNA(n) + a ribonucleoside 5'-triphosphate = RNA(n+1) + diphosphate. In terms of biological role, promotes RNA polymerase assembly. Latches the N- and C-terminal regions of the beta' subunit thereby facilitating its interaction with the beta and alpha subunits. The protein is DNA-directed RNA polymerase subunit omega (rpoZ) of Treponema pallidum (strain Nichols).